The following is a 603-amino-acid chain: NADH-ubiquinone oxidoreductase chain 5 (603 aa).

14 helical membrane-spanning segments follow: residues 4–24 (YTSI…ATLV), 36–56 (VKTT…LYIF), 87–107 (MMFI…SLWY), 122–142 (LIFL…QLFI), 171–191 (AVLY…WFLL), 211–233 (LPLM…HPWL), 241–261 (TPVS…FLLI), 272–292 (LTQN…AMCA), 301–320 (IVAF…IGIN), 325–347 (AFLH…GSII), 370–390 (STSL…TGFY), 406–422 (AWAL…TSAY), 488–508 (LLAL…TLMT), and 583–603 (MIKL…LLMV).

Belongs to the complex I subunit 5 family. Core subunit of respiratory chain NADH dehydrogenase (Complex I) which is composed of 45 different subunits.

It localises to the mitochondrion inner membrane. It carries out the reaction a ubiquinone + NADH + 5 H(+)(in) = a ubiquinol + NAD(+) + 4 H(+)(out). Core subunit of the mitochondrial membrane respiratory chain NADH dehydrogenase (Complex I) which catalyzes electron transfer from NADH through the respiratory chain, using ubiquinone as an electron acceptor. Essential for the catalytic activity and assembly of complex I. This Papio hamadryas (Hamadryas baboon) protein is NADH-ubiquinone oxidoreductase chain 5 (MT-ND5).